A 243-amino-acid polypeptide reads, in one-letter code: uncharacterized protein (243 aa).

The [4Fe-4S] cluster site is built by Cys-120 and Cys-157.

As to quaternary structure, homodimer. [4Fe-4S] cluster is required as a cofactor.

This is an uncharacterized protein from Methanocaldococcus jannaschii (strain ATCC 43067 / DSM 2661 / JAL-1 / JCM 10045 / NBRC 100440) (Methanococcus jannaschii).